A 233-amino-acid chain; its full sequence is Octanoyltransferase (233 aa).

Residues 36–211 (DTTPDEIWLV…EFTRQLGYPT (176 aa)) form the BPL/LPL catalytic domain. Residues 75–82 (RGGQITYH), 142–144 (SLG), and 155–157 (GLA) each bind substrate. The active-site Acyl-thioester intermediate is cysteine 173.

It belongs to the LipB family.

It localises to the cytoplasm. It catalyses the reaction octanoyl-[ACP] + L-lysyl-[protein] = N(6)-octanoyl-L-lysyl-[protein] + holo-[ACP] + H(+). Its pathway is protein modification; protein lipoylation via endogenous pathway; protein N(6)-(lipoyl)lysine from octanoyl-[acyl-carrier-protein]: step 1/2. Catalyzes the transfer of endogenously produced octanoic acid from octanoyl-acyl-carrier-protein onto the lipoyl domains of lipoate-dependent enzymes. Lipoyl-ACP can also act as a substrate although octanoyl-ACP is likely to be the physiological substrate. This chain is Octanoyltransferase, found in Yersinia pseudotuberculosis serotype O:1b (strain IP 31758).